A 450-amino-acid chain; its full sequence is Bifunctional protein GlmU (450 aa).

The pyrophosphorylase stretch occupies residues 1-228; the sequence is MSTALVILAA…EAQTLGVNSR (228 aa). UDP-N-acetyl-alpha-D-glucosamine is bound by residues 8-11, Lys22, Gln75, 80-81, 103-105, Gly140, Glu154, Asn169, and Asn226; these read LAAG, GT, and YGD. Asp105 contributes to the Mg(2+) binding site. Mg(2+) is bound at residue Asn226. Residues 229–249 form a linker region; it reads ADLAAADAIFQTRARAELLDL. Residues 250–450 form an N-acetyltransferase region; that stretch reads GVTLMAPETV…AKKASKQKET (201 aa). Residues Arg315 and Lys333 each coordinate UDP-N-acetyl-alpha-D-glucosamine. The active-site Proton acceptor is His345. UDP-N-acetyl-alpha-D-glucosamine contacts are provided by Tyr348 and Asn359. Acetyl-CoA contacts are provided by residues Ala362, 368-369, Ser387, Thr405, and Arg422; that span reads NY.

This sequence in the N-terminal section; belongs to the N-acetylglucosamine-1-phosphate uridyltransferase family. The protein in the C-terminal section; belongs to the transferase hexapeptide repeat family. As to quaternary structure, homotrimer. Mg(2+) is required as a cofactor.

It is found in the cytoplasm. The enzyme catalyses alpha-D-glucosamine 1-phosphate + acetyl-CoA = N-acetyl-alpha-D-glucosamine 1-phosphate + CoA + H(+). The catalysed reaction is N-acetyl-alpha-D-glucosamine 1-phosphate + UTP + H(+) = UDP-N-acetyl-alpha-D-glucosamine + diphosphate. It functions in the pathway nucleotide-sugar biosynthesis; UDP-N-acetyl-alpha-D-glucosamine biosynthesis; N-acetyl-alpha-D-glucosamine 1-phosphate from alpha-D-glucosamine 6-phosphate (route II): step 2/2. It participates in nucleotide-sugar biosynthesis; UDP-N-acetyl-alpha-D-glucosamine biosynthesis; UDP-N-acetyl-alpha-D-glucosamine from N-acetyl-alpha-D-glucosamine 1-phosphate: step 1/1. The protein operates within bacterial outer membrane biogenesis; LPS lipid A biosynthesis. Catalyzes the last two sequential reactions in the de novo biosynthetic pathway for UDP-N-acetylglucosamine (UDP-GlcNAc). The C-terminal domain catalyzes the transfer of acetyl group from acetyl coenzyme A to glucosamine-1-phosphate (GlcN-1-P) to produce N-acetylglucosamine-1-phosphate (GlcNAc-1-P), which is converted into UDP-GlcNAc by the transfer of uridine 5-monophosphate (from uridine 5-triphosphate), a reaction catalyzed by the N-terminal domain. The chain is Bifunctional protein GlmU from Ruegeria pomeroyi (strain ATCC 700808 / DSM 15171 / DSS-3) (Silicibacter pomeroyi).